The primary structure comprises 240 residues: Seed lectin (240 aa).

The N-linked (GlcNAc...) asparagine glycan is linked to Asn-111. Mn(2+) is bound by residues Glu-123 and Asp-125. Residues Asp-125, Asn-129, and Asp-132 each coordinate Ca(2+). 2 residues coordinate Mn(2+): Asp-132 and His-137. N-linked (GlcNAc...) asparagine glycosylation occurs at Asn-183.

Belongs to the leguminous lectin family. As to quaternary structure, homotetramer. In terms of processing, partially N-glycosylated at Asn-111 and Asn-183 with the heptasaccharide [(beta-xylosyl-1,2)(alpha-mannosyl-1,6)(alpha-mannosyl-1,3)]beta-manosyl-1,4-GlcNAC-beta-1,4-GlcNAc-beta-1,4 [alpha-fucosyl-1,3]GlcNAc. A small proportion of alpha chains are proteolytically cleaved at 114-115 into gamma and beta chains. This is probably dependent on the deglycosylation of Asn-111. Seed.

Functionally, lectin that binds galactose. The polypeptide is Seed lectin (Vatairea macrocarpa).